The primary structure comprises 328 residues: Transcription initiation factor TFIID subunit 8 (328 aa).

The 68-residue stretch at Arg-16–Gly-83 folds into the Histone-fold domain. Residues Asn-229–Ala-309 are disordered. Residues Ser-236, Ser-245, and Ser-255 each carry the phosphoserine modification. Positions Asp-239–Asp-251 are enriched in acidic residues. The segment covering Gly-252–Ile-264 has biased composition (basic and acidic residues). Residues Asn-296–Ala-309 are compositionally biased toward polar residues.

Belongs to the TAF8 family. In terms of assembly, belongs to the TFIID complex which is composed of TATA binding protein (Tbp) and a number of TBP-associated factors (TAFs). Histone fold interacts with N-terminus of Taf10b.

Its subcellular location is the nucleus. Functionally, TFIID is a multimeric protein complex that plays a central role in mediating promoter responses to various activators and repressors. The sequence is that of Transcription initiation factor TFIID subunit 8 from Drosophila melanogaster (Fruit fly).